Consider the following 405-residue polypeptide: S-adenosylmethionine synthase (405 aa).

An ATP-binding site is contributed by 139 to 144; it reads GKGSAD.

The protein belongs to the AdoMet synthase 2 family. Requires Mg(2+) as cofactor.

It carries out the reaction L-methionine + ATP + H2O = S-adenosyl-L-methionine + phosphate + diphosphate. It functions in the pathway amino-acid biosynthesis; S-adenosyl-L-methionine biosynthesis; S-adenosyl-L-methionine from L-methionine: step 1/1. Functionally, catalyzes the formation of S-adenosylmethionine from methionine and ATP. This Sulfurisphaera tokodaii (strain DSM 16993 / JCM 10545 / NBRC 100140 / 7) (Sulfolobus tokodaii) protein is S-adenosylmethionine synthase.